Reading from the N-terminus, the 228-residue chain is UPF0328 protein ECU07_0040 (228 aa).

This sequence belongs to the UPF0328 family.

The sequence is that of UPF0328 protein ECU07_0040 from Encephalitozoon cuniculi (strain GB-M1) (Microsporidian parasite).